A 283-amino-acid polypeptide reads, in one-letter code: S-adenosylmethionine mitochondrial carrier protein homolog (283 aa).

Solcar repeat units follow at residues 11 to 84 (LKFF…GKQF), 93 to 178 (DSPY…FKLQ), and 187 to 275 (STPF…TTRI). 6 helical membrane passes run 14-34 (FHALVAGGVAGMVVDIALFPI), 55-75 (GIYKGLAPAAAGSAPTAALFF), 99-119 (MAAASAAEVLACLIRVPVEIA), 152-172 (RGFGSTIMREIPFSLIQFPLW), 190-210 (FSVALCGAVAGGISAGLTTPL), and 248-268 (FAGFVPRVLWITLGGAFFFGF).

This sequence belongs to the mitochondrial carrier (TC 2.A.29) family.

It localises to the mitochondrion inner membrane. Mitochondrial solute carriers shuttle metabolites, nucleotides, and cofactors through the mitochondrial inner membrane. May mediate the transport of S-adenosylmethionine (SAM) into the mitochondria. The polypeptide is S-adenosylmethionine mitochondrial carrier protein homolog (Drosophila melanogaster (Fruit fly)).